The sequence spans 87 residues: MSQAEFDKAAEEVKNLKTKPADDEMLFIYSHYKQATVGDINTERPGMLDFKGKAKWDAWNQLKGTSKEDAMKSYIDKVEELKKKYGI.

At serine 2 the chain carries N-acetylserine. The ACB domain maps to 2 to 87 (SQAEFDKAAE…VEELKKKYGI (86 aa)). N6-acetyllysine; alternate is present on lysine 8. Lysine 8 is modified (N6-succinyllysine; alternate). An an acyl-CoA-binding site is contributed by lysine 14. N6-succinyllysine is present on lysine 17. Lysine 19 is subject to N6-acetyllysine. Position 29 is a phosphotyrosine (tyrosine 29). Residues 29–33 (YSHYK), lysine 51, lysine 55, and tyrosine 74 contribute to the an acyl-CoA site. Position 51 is an N6-acetyllysine (lysine 51). Lysine 55 bears the N6-acetyllysine; alternate mark. The residue at position 55 (lysine 55) is an N6-succinyllysine; alternate. An N6-(2-hydroxyisobutyryl)lysine; alternate modification is found at lysine 55. The residue at position 55 (lysine 55) is an N6-malonyllysine; alternate. Lysine 77 is modified (N6-acetyllysine; alternate). Residue lysine 77 is modified to N6-succinyllysine; alternate.

It belongs to the ACBP family. As to quaternary structure, monomer.

Its subcellular location is the endoplasmic reticulum. It is found in the golgi apparatus. Functionally, binds medium- and long-chain acyl-CoA esters with very high affinity and may function as an intracellular carrier of acyl-CoA esters. The polypeptide is Acyl-CoA-binding protein (DBI) (Chaetophractus villosus (South American armadillo)).